The chain runs to 184 residues: Vacuolar protein sorting-associated protein 68 (184 aa).

N-acetylmethionine is present on Met1. Residue Ser8 is modified to Phosphoserine. The chain crosses the membrane as a helical span at residues Gly26–Leu46. Residue Asn52 is glycosylated (N-linked (GlcNAc...) asparagine). A run of 3 helical transmembrane segments spans residues Val56 to Val76, Leu115 to Ile135, and Met150 to Ile170.

The protein belongs to the UPF0220 family.

It localises to the vacuole membrane. It is found in the mitochondrion. Involved in vacuolar protein sorting. The protein is Vacuolar protein sorting-associated protein 68 (VPS68) of Saccharomyces cerevisiae (strain ATCC 204508 / S288c) (Baker's yeast).